A 459-amino-acid chain; its full sequence is Exodeoxyribonuclease 7 large subunit (459 aa).

This sequence belongs to the XseA family. Heterooligomer composed of large and small subunits.

The protein resides in the cytoplasm. The enzyme catalyses Exonucleolytic cleavage in either 5'- to 3'- or 3'- to 5'-direction to yield nucleoside 5'-phosphates.. Its function is as follows. Bidirectionally degrades single-stranded DNA into large acid-insoluble oligonucleotides, which are then degraded further into small acid-soluble oligonucleotides. The polypeptide is Exodeoxyribonuclease 7 large subunit (Pseudomonas aeruginosa (strain UCBPP-PA14)).